The primary structure comprises 546 residues: Oncoprotein-induced transcript 3 protein (546 aa).

The first 16 residues, 1-16, serve as a signal peptide directing secretion; sequence MPLSLLLACLFTTVTL. Residues Asn89 and Asn116 are each glycosylated (N-linked (GlcNAc...) asparagine). Residues 182–222 enclose the EGF-like; calcium-binding domain; it reads DENECEHNNGGCSEICVNLKNSHRCACGVGRVLRSDGKTCE. 3 disulfide bridges follow: Cys186-Cys197, Cys193-Cys206, and Cys208-Cys221. A ZP domain is found at 261 to 516; sequence TCQVPVLCKS…SRCAQGCHRR (256 aa). Asn299 carries an N-linked (GlcNAc...) asparagine glycan. The interval 524–546 is disordered; that stretch reads DEDSAGLQSQTLTGGPISIDWEE.

Its subcellular location is the nucleus envelope. Functionally, may be involved in hepatocellular function and development. The protein is Oncoprotein-induced transcript 3 protein (Oit3) of Rattus norvegicus (Rat).